A 322-amino-acid chain; its full sequence is Transaldolase (322 aa).

Catalysis depends on K132, which acts as the Schiff-base intermediate with substrate.

Belongs to the transaldolase family. Type 1 subfamily. In terms of assembly, homodimer.

The protein localises to the cytoplasm. The catalysed reaction is D-sedoheptulose 7-phosphate + D-glyceraldehyde 3-phosphate = D-erythrose 4-phosphate + beta-D-fructose 6-phosphate. The protein operates within carbohydrate degradation; pentose phosphate pathway; D-glyceraldehyde 3-phosphate and beta-D-fructose 6-phosphate from D-ribose 5-phosphate and D-xylulose 5-phosphate (non-oxidative stage): step 2/3. In terms of biological role, transaldolase is important for the balance of metabolites in the pentose-phosphate pathway. This Protochlamydia amoebophila (strain UWE25) protein is Transaldolase.